The primary structure comprises 268 residues: Ribosomal RNA small subunit methyltransferase A (268 aa).

S-adenosyl-L-methionine contacts are provided by Asn-16, Leu-18, Gly-43, Glu-64, Asp-89, and Asn-110.

Belongs to the class I-like SAM-binding methyltransferase superfamily. rRNA adenine N(6)-methyltransferase family. RsmA subfamily.

It localises to the cytoplasm. The enzyme catalyses adenosine(1518)/adenosine(1519) in 16S rRNA + 4 S-adenosyl-L-methionine = N(6)-dimethyladenosine(1518)/N(6)-dimethyladenosine(1519) in 16S rRNA + 4 S-adenosyl-L-homocysteine + 4 H(+). Functionally, specifically dimethylates two adjacent adenosines (A1518 and A1519) in the loop of a conserved hairpin near the 3'-end of 16S rRNA in the 30S particle. May play a critical role in biogenesis of 30S subunits. The sequence is that of Ribosomal RNA small subunit methyltransferase A from Pseudomonas savastanoi pv. phaseolicola (strain 1448A / Race 6) (Pseudomonas syringae pv. phaseolicola (strain 1448A / Race 6)).